The primary structure comprises 468 residues: MLSLPGLNLAPQPAEPLNAPTSTVTRTQDLAANTEYRFEVSFARTLTIKLQSGTAEFFGTELAPSTTYSFQGTKGAVFTWHGCKLEIGGEVESDYVAEETPMMSCANLHFALELLRDQSVSSGSAEMGPRVLVVGPEHSGKTSLVKVMTSYAAKTSRQPMVVNLDPRQGMLSIPGSFSAAAYSSIVDIEEGWGSSPISGPSPIPVKMPLVYHYGLKDPEEGKVFKPLVTRMALAVTSRLEEDKLSKQAGFIIDSSGAISQGRNGVYENIEHIVSEFSVNVLITLGSERLYSDLSRKYRNRDPSESVNVIRLDKSGGCVNRPEEYMKALRHAQVREYFFGHGDNTLAPSSQTCDFGDLHIFQIVEGDEGALYRSGDYDEYDPSNVSLASIYTRVTPSPSLQNSLLAITTASPTDSQDVIRDSSVKGYIYVADVDEAKKKVRLLSPQPGMIPGNAMVLGTWPEDVPGLVG.

The segment at 1–22 (MLSLPGLNLAPQPAEPLNAPTS) is disordered. ATP contacts are provided by residues Glu35, Lys74, and 138–143 (HSGKTS).

It belongs to the Clp1 family. Clp1 subfamily. In terms of assembly, component of a pre-mRNA cleavage factor complex. Interacts directly with PCF11.

It is found in the nucleus. In terms of biological role, required for endonucleolytic cleavage during polyadenylation-dependent pre-mRNA 3'-end formation. In Phaeosphaeria nodorum (strain SN15 / ATCC MYA-4574 / FGSC 10173) (Glume blotch fungus), this protein is mRNA cleavage and polyadenylation factor CLP1.